The following is a 209-amino-acid chain: Ribonuclease HII (209 aa).

In terms of domain architecture, RNase H type-2 spans 19-209; that stretch reads CIIVGVDEVG…LPGITKLYSK (191 aa). Residues Asp-25, Glu-26, and Asp-118 each coordinate a divalent metal cation.

Belongs to the RNase HII family. Requires Mn(2+) as cofactor. Mg(2+) serves as cofactor.

The protein localises to the cytoplasm. It catalyses the reaction Endonucleolytic cleavage to 5'-phosphomonoester.. In terms of biological role, endonuclease that specifically degrades the RNA of RNA-DNA hybrids. This chain is Ribonuclease HII, found in Ehrlichia canis (strain Jake).